The chain runs to 340 residues: Pre-mRNA-splicing factor cwf17 (340 aa).

7 WD repeats span residues 48 to 87 (GHTA…KNYG), 91 to 130 (GCKG…KIRK), 133 to 173 (GHAG…CIKT), 175 to 214 (EEKY…CSHV), 217 to 256 (GHKD…SAQR), 267 to 306 (GQEH…RYVL), and 308 to 339 (GHEG…LGEL).

In terms of assembly, belongs to the 40S cdc5-associated complex (or cwf complex), a spliceosome sub-complex reminiscent of a late-stage spliceosome composed of the U2, U5 and U6 snRNAs and at least brr2, cdc5, cwf2/prp3, cwf3/syf1, cwf4/syf3, cwf5/ecm2, spp42/cwf6, cwf7/spf27, cwf8, cwf9, cwf10, cwf11, cwf12, prp45/cwf13, cwf14, cwf15, cwf16, cwf17, cwf18, cwf19, cwf20, cwf21, cwf22, cwf23, cwf24, cwf25, cwf26, cyp7/cwf27, cwf28, cwf29/ist3, lea1, msl1, prp5/cwf1, prp10, prp12/sap130, prp17, prp22, sap61, sap62, sap114, sap145, slu7, smb1, smd1, smd3, smf1, smg1 and syf2.

It is found in the nucleus. Its function is as follows. Involved in mRNA splicing where it associates with cdc5 and the other cwf proteins as part of the spliceosome. This is Pre-mRNA-splicing factor cwf17 (cwf17) from Schizosaccharomyces pombe (strain 972 / ATCC 24843) (Fission yeast).